Consider the following 119-residue polypeptide: MTQQGAALQNYNNELVKCIEELCQKREELCRQIQEEEDEKQRLQNEVRQLTEKLARVNENLARKIASRNEFDRTIAETEAAYLKILESSQTLLSVLKREAGNLTKATAPDQKSSGGRDS.

Residue Thr2 is modified to N-acetylthreonine. The important for localization to the centrosome stretch occupies residues 2–32 (TQQGAALQNYNNELVKCIEELCQKREELCRQ). A coiled-coil region spans residues 13–70 (NELVKCIEELCQKREELCRQIQEEEDEKQRLQNEVRQLTEKLARVNENLARKIASRNE).

Belongs to the SSNA1 family. As to quaternary structure, self-associates to form fibrils. Also forms dimers as well as monomers. Interacts with SPAST. Widely expressed.

The protein resides in the nucleus. It localises to the cytoplasm. The protein localises to the cytoskeleton. It is found in the microtubule organizing center. Its subcellular location is the centrosome. The protein resides in the centriole. It localises to the midbody. The protein localises to the flagellum basal body. It is found in the flagellum axoneme. Its subcellular location is the cell projection. The protein resides in the axon. Its function is as follows. Microtubule-binding protein which stabilizes dynamic microtubules by slowing growth and shrinkage at both plus and minus ends and serves as a sensor of microtubule damage, protecting microtubules from the microtubule-severing enzyme SPAST. Induces microtubule branching which is mediated by the formation of long SSNA1 fibrils which guide microtubule protofilaments to split apart from the mother microtubule and form daughter microtubules. Plays a role in axon outgrowth and branching. Required for cell division. This Homo sapiens (Human) protein is Microtubule nucleation factor SSNA1.